A 240-amino-acid polypeptide reads, in one-letter code: uncharacterized protein (240 aa).

The protein localises to the mitochondrion. This is an uncharacterized protein from Arabidopsis thaliana (Mouse-ear cress).